Here is a 374-residue protein sequence, read N- to C-terminus: Zinc finger CCCH domain-containing protein 15 homolog (374 aa).

The disordered stretch occupies residues 1 to 20; the sequence is MPPKQQGPSKKSEQKRKEKV. Over residues 10 to 20 the composition is skewed to basic and acidic residues; it reads KKSEQKRKEKV. 2 consecutive C3H1-type zinc fingers follow at residues 90–117 and 166–199; these read DPKSLLCVFFKQGLCGKGAKCKFSHDLA and VCKYFLEAVENNKYGWFWECPNGGEKCQYRHCLP.

The protein belongs to the ZC3H15/TMA46 family.

This is Zinc finger CCCH domain-containing protein 15 homolog from Caenorhabditis elegans.